The primary structure comprises 168 residues: Putative insulin-like growth factor 2 antisense gene protein (168 aa).

Disordered stretches follow at residues 1–91 (MSKR…ERSN) and 108–168 (PLRR…RPGK). Basic residues-rich tracts occupy residues 59–70 (AQRRRGSARRGA) and 159–168 (RWRQPGRPGK).

The chain is Putative insulin-like growth factor 2 antisense gene protein (IGF2-AS) from Homo sapiens (Human).